The chain runs to 374 residues: Queuine tRNA-ribosyltransferase (374 aa).

Residue Asp-89 is the Proton acceptor of the active site. Residues Asp-89–Phe-93, Asp-143, Gln-187, and Gly-214 each bind substrate. The segment at Gly-245–Asp-251 is RNA binding. Asp-264 acts as the Nucleophile in catalysis. The segment at Thr-269–Arg-273 is RNA binding; important for wobble base 34 recognition. Zn(2+) contacts are provided by Cys-302, Cys-304, Cys-307, and His-333.

This sequence belongs to the queuine tRNA-ribosyltransferase family. Homodimer. Within each dimer, one monomer is responsible for RNA recognition and catalysis, while the other monomer binds to the replacement base PreQ1. It depends on Zn(2+) as a cofactor.

The enzyme catalyses 7-aminomethyl-7-carbaguanine + guanosine(34) in tRNA = 7-aminomethyl-7-carbaguanosine(34) in tRNA + guanine. It functions in the pathway tRNA modification; tRNA-queuosine biosynthesis. In terms of biological role, catalyzes the base-exchange of a guanine (G) residue with the queuine precursor 7-aminomethyl-7-deazaguanine (PreQ1) at position 34 (anticodon wobble position) in tRNAs with GU(N) anticodons (tRNA-Asp, -Asn, -His and -Tyr). Catalysis occurs through a double-displacement mechanism. The nucleophile active site attacks the C1' of nucleotide 34 to detach the guanine base from the RNA, forming a covalent enzyme-RNA intermediate. The proton acceptor active site deprotonates the incoming PreQ1, allowing a nucleophilic attack on the C1' of the ribose to form the product. After dissociation, two additional enzymatic reactions on the tRNA convert PreQ1 to queuine (Q), resulting in the hypermodified nucleoside queuosine (7-(((4,5-cis-dihydroxy-2-cyclopenten-1-yl)amino)methyl)-7-deazaguanosine). This is Queuine tRNA-ribosyltransferase from Shewanella sp. (strain MR-4).